The chain runs to 285 residues: (2Z,6Z)-farnesyl diphosphate synthase CPT6, chloroplastic (285 aa).

A chloroplast-targeting transit peptide spans 1-30 (MNSLFVGRPIVKSSYNVYTLPSSICGGHFF). Aspartate 65 is a catalytic residue.

This sequence belongs to the UPP synthase family. It depends on Mg(2+) as a cofactor. In terms of tissue distribution, expressed in roots and red fruits.

It localises to the plastid. The protein resides in the chloroplast. It catalyses the reaction 2 isopentenyl diphosphate + dimethylallyl diphosphate = (2Z,6Z)-farnesyl diphosphate + 2 diphosphate. It carries out the reaction isopentenyl diphosphate + dimethylallyl diphosphate = neryl diphosphate + diphosphate. The enzyme catalyses neryl diphosphate + isopentenyl diphosphate = (2Z,6Z)-farnesyl diphosphate + diphosphate. Functionally, uses neryl diphosphate to catalyze the cis-prenyl chain elongation and produce the 15 carbon product (2Z,6Z)-farnesyl diphosphate. In Solanum lycopersicum (Tomato), this protein is (2Z,6Z)-farnesyl diphosphate synthase CPT6, chloroplastic.